We begin with the raw amino-acid sequence, 227 residues long: PKHD-type hydroxylase Bamb_4192 (227 aa).

In terms of domain architecture, Fe2OG dioxygenase spans 78 to 178 (KVFPPLFNRY…RVASFFWIQS (101 aa)). Residues His-96, Asp-98, and His-159 each coordinate Fe cation. A 2-oxoglutarate-binding site is contributed by Arg-169.

Requires Fe(2+) as cofactor. L-ascorbate serves as cofactor.

In Burkholderia ambifaria (strain ATCC BAA-244 / DSM 16087 / CCUG 44356 / LMG 19182 / AMMD) (Burkholderia cepacia (strain AMMD)), this protein is PKHD-type hydroxylase Bamb_4192.